We begin with the raw amino-acid sequence, 341 residues long: LIM and senescent cell antigen-like-containing domain protein 2 (341 aa).

5 LIM zinc-binding domains span residues 13–74 (AVCQ…LFAP), 76–133 (CGSC…EKAK), 138–195 (YICQ…KMGV), 196–255 (PICG…LFGD), and 256–315 (VCYN…FPLE). F22 bears the Phosphoserine mark. Phosphothreonine is present on T327. S328 is subject to Phosphoserine.

As to quaternary structure, interacts with TGFB1I1. Interacts with integrin-linked protein kinase 1 (ILK) via the first LIM domain, and in competition with LIMS1. Part of the heterotrimeric IPP complex composed of integrin-linked kinase (ILK), LIMS1 or LIMS2, and PARVA.

It localises to the nucleus. Its subcellular location is the cell junction. It is found in the focal adhesion. The protein resides in the cell membrane. Adapter protein in a cytoplasmic complex linking beta-integrins to the actin cytoskeleton, bridges the complex to cell surface receptor tyrosine kinases and growth factor receptors. Plays a role in modulating cell spreading and migration. The sequence is that of LIM and senescent cell antigen-like-containing domain protein 2 (LIMS2) from Homo sapiens (Human).